We begin with the raw amino-acid sequence, 253 residues long: Transmembrane protein 51 (253 aa).

Helical transmembrane passes span 17-37 (IGLG…VPGF) and 65-85 (VAYV…CLSI). 2 disordered regions span residues 93 to 133 (QGED…YVPS) and 164 to 253 (LTGL…RPPD). The segment covering 113-124 (EDSQEEEEEDEE) has biased composition (acidic residues). Residue serine 115 is modified to Phosphoserine. Polar residues predominate over residues 164 to 176 (LTGLDETTPTSTR). Serine 182 and serine 192 each carry phosphoserine. A compositionally biased stretch (basic residues) spans 194 to 205 (LAKRLKPLKVRR). The span at 206–217 (IKSEKLHLKDFR) shows a compositional bias: basic and acidic residues. The span at 224 to 238 (NVPPPSIEPLTPPPQ) shows a compositional bias: pro residues. Positions 242 to 253 (VQEKAPDTRPPD) are enriched in basic and acidic residues.

Its subcellular location is the membrane. This Homo sapiens (Human) protein is Transmembrane protein 51 (TMEM51).